The chain runs to 436 residues: AP-2 complex subunit mu-B (436 aa).

One can recognise an MHD domain in the interval 170 to 435; that stretch reads RNELFLDVLE…IGRSGIYETR (266 aa). The a 1,2-diacyl-sn-glycero-3-phospho-(1D-myo-inositol-3,4,5-trisphosphate) site is built by K342, K346, and K355.

The protein belongs to the adaptor complexes medium subunit family. In terms of assembly, adaptor protein complex 2 (AP-2) is a heterotetramer composed of two large adaptins (alpha-type subunit and beta-type subunit), a medium adaptin (mu-type subunit) and a small adaptin (sigma-type subunit).

It is found in the cell membrane. The protein resides in the membrane. It localises to the coated pit. Its function is as follows. Component of the adaptor complexes which link clathrin to receptors in coated vesicles. Clathrin-associated protein complexes are believed to interact with the cytoplasmic tails of membrane proteins, leading to their selection and concentration. AP50 is a subunit of the plasma membrane adaptor. The complex binds polyphosphoinositide-containing lipids. The protein is AP-2 complex subunit mu-B (ap2m1b) of Danio rerio (Zebrafish).